A 306-amino-acid chain; its full sequence is Protein FdhE homolog (306 aa).

This sequence belongs to the FdhE family.

It localises to the cytoplasm. Necessary for formate dehydrogenase activity. The protein is Protein FdhE homolog of Glaesserella parasuis serovar 5 (strain SH0165) (Haemophilus parasuis).